We begin with the raw amino-acid sequence, 509 residues long: Anaerobic nitric oxide reductase transcription regulator NorR (509 aa).

4-aspartylphosphate is present on D56. The Sigma-54 factor interaction domain occupies 186 to 415 (MIGRSPAMDR…LEHAIHRAAV (230 aa)). ATP-binding positions include 214 to 221 (GETGVGKE) and 277 to 286 (ADKGTLFLDE). Residues 484-503 (WAATARALEMDGGNLHRLAR) constitute a DNA-binding region (H-T-H motif).

It participates in nitrogen metabolism; nitric oxide reduction. In terms of biological role, required for the expression of anaerobic nitric oxide (NO) reductase, acts as a transcriptional activator for at least the norVW operon. Activation also requires sigma-54. The chain is Anaerobic nitric oxide reductase transcription regulator NorR from Aeromonas salmonicida (strain A449).